Reading from the N-terminus, the 206-residue chain is N-(5'-phosphoribosyl)anthranilate isomerase (206 aa).

It belongs to the TrpF family.

The catalysed reaction is N-(5-phospho-beta-D-ribosyl)anthranilate = 1-(2-carboxyphenylamino)-1-deoxy-D-ribulose 5-phosphate. It participates in amino-acid biosynthesis; L-tryptophan biosynthesis; L-tryptophan from chorismate: step 3/5. The sequence is that of N-(5'-phosphoribosyl)anthranilate isomerase from Pseudomonas putida (strain ATCC 700007 / DSM 6899 / JCM 31910 / BCRC 17059 / LMG 24140 / F1).